A 214-amino-acid polypeptide reads, in one-letter code: Alkaline phosphatase-like protein (214 aa).

The next 3 membrane-spanning stretches (helical) occupy residues 48–68, 141–161, and 177–197; these read LGII…ALIL, FLIL…CLGA, and YSSV…LIFV.

It belongs to the DedA family.

The protein resides in the cell membrane. The sequence is that of Alkaline phosphatase-like protein (apl) from Lactococcus lactis subsp. lactis (strain IL1403) (Streptococcus lactis).